Here is a 399-residue protein sequence, read N- to C-terminus: Phosphoglycerate kinase (399 aa).

Substrate-binding positions include 22 to 24 (DFN), arginine 38, 61 to 64 (HLGR), arginine 120, and arginine 153. ATP-binding positions include lysine 204, glutamate 326, and 353-356 (GGDT).

The protein belongs to the phosphoglycerate kinase family. As to quaternary structure, monomer.

The protein resides in the cytoplasm. It carries out the reaction (2R)-3-phosphoglycerate + ATP = (2R)-3-phospho-glyceroyl phosphate + ADP. It functions in the pathway carbohydrate degradation; glycolysis; pyruvate from D-glyceraldehyde 3-phosphate: step 2/5. This chain is Phosphoglycerate kinase, found in Geotalea daltonii (strain DSM 22248 / JCM 15807 / FRC-32) (Geobacter daltonii).